The following is a 319-amino-acid chain: Transcription factor bHLH111 (319 aa).

The tract at residues 1 to 23 (MDHHHHIASRNSSTTSELPSFEP) is disordered. Positions 9–18 (SRNSSTTSEL) are enriched in polar residues. A bHLH domain is found at 195-244 (SEGSTLSPEKELPKAKLRDKITTLQQIVSPFGKTDTASVLQEAITYINFY).

As to quaternary structure, homodimer.

The protein resides in the nucleus. The protein is Transcription factor bHLH111 (BHLH111) of Arabidopsis thaliana (Mouse-ear cress).